A 471-amino-acid chain; its full sequence is Pneumolysin (471 aa).

4 consecutive transmembrane segments (beta stranded) span residues 158 to 171 (MEQLKVKFGSDFEK), 178 to 187 (IDFNSVHSGE), 256 to 265 (SDEVEAAFEA), and 273 to 285 (APQTEWKQILDNT). The Conserved undecapeptide motif lies at 427 to 437 (ECTGLAWEWWR). Residues 459 to 460 (TL) carry the Cholesterol binding motif.

Belongs to the cholesterol-dependent cytolysin family. As to quaternary structure, elongated monomers align along their lengths, indicating intersubunit contacts and suggesting the prepore structure. Modeling based on cryo-EM shows a homooligomeric pore complex containing 38-44 subunits; when inserted in the host membrane. The size of isolated pores is detergent-dependent; in amphipol A8-35 homogenous rings form with 42 subunits.

The protein localises to the secreted. Its subcellular location is the host cell membrane. With respect to regulation, erythrocytes hemolysis is inhibited by cholesterol. Its function is as follows. A cholesterol-dependent toxin that causes cytolysis by forming pores in cholesterol-containing host membranes. After binding to target membranes, the protein undergoes a major conformation change, leading to its insertion in the host membrane and formation of an oligomeric pore complex. Cholesterol is required for binding to host membranes, membrane insertion and pore formation; cholesterol binding is mediated by a Thr-Leu pair in the C-terminus. Can be reversibly inactivated by oxidation. The chain is Pneumolysin (ply) from Streptococcus pneumoniae serotype 2 (strain D39 / NCTC 7466).